We begin with the raw amino-acid sequence, 143 residues long: Peptide methionine sulfoxide reductase B9 (143 aa).

The MsrB domain maps to 19-140 (DQDWRAILSP…NSVSLKFSEI (122 aa)). Zn(2+) is bound by residues Cys-58, Cys-61, Cys-104, and Cys-107. Cys-76 and Cys-129 form a disulfide bridge. Catalysis depends on Cys-129, which acts as the Nucleophile.

Belongs to the MsrB Met sulfoxide reductase family. It depends on Zn(2+) as a cofactor.

It localises to the cytoplasm. The protein localises to the cytosol. The enzyme catalyses L-methionyl-[protein] + [thioredoxin]-disulfide + H2O = L-methionyl-(R)-S-oxide-[protein] + [thioredoxin]-dithiol. In terms of biological role, catalyzes the reduction of methionine sulfoxide (MetSO) to methionine in proteins. Plays a protective role against oxidative stress by restoring activity to proteins that have been inactivated by methionine oxidation. MSRB family specifically reduces the MetSO R-enantiomer. The sequence is that of Peptide methionine sulfoxide reductase B9 (MSRB9) from Arabidopsis thaliana (Mouse-ear cress).